Reading from the N-terminus, the 393-residue chain is Cytochrome b (393 aa).

Residues 1–33 (MTIRNQRFSLLKQPISSTLNQHLVDYPTPSNLS) lie on the Mitochondrial matrix side of the membrane. The chain crosses the membrane as a helical span at residues 34–57 (YWWGFGSLAGICLVIQIVTGVFLA). Residues 58 to 80 (MHYTPHVDLAFNSVEHIMRDVEG) lie on the Mitochondrial intermembrane side of the membrane. Residues 81–108 (GWLLRYMHANGASMFFIVVYLHIFRGLY) form a helical membrane-spanning segment. His-88 and His-102 together coordinate heme b. Residues 109-116 (YASYSSPR) are Mitochondrial matrix-facing. Residues 117-141 (EFVWCLGVVIFLLMIVTAFIGYVLP) form a helical membrane-spanning segment. At 142–178 (WGQMSFWGATVITSLASAIPVVGDTIVTWLWGGFSVD) the chain is on the mitochondrial intermembrane side. A helical membrane pass occupies residues 179–210 (NATLNRFFSLHYLLPFILVGASLLHLAALHQY). His-189 and His-203 together coordinate heme b. His-208 is a binding site for a ubiquinone. Residues 211–229 (GSNNPLGVHSEMDKIAFYP) are Mitochondrial matrix-facing. A helical transmembrane segment spans residues 230-252 (YFYVKDLVGWVAFAIFFSIWIFY). Residues 253 to 293 (APNVLGHPDNYIPANPMSTPPHIVPEWYFLPIYAILRSIPD) lie on the Mitochondrial intermembrane side of the membrane. Residues 294–314 (KAGGVAAIALVFICLLALPFF) traverse the membrane as a helical segment. Residues 315–325 (KSMYVRSSSFR) are Mitochondrial matrix-facing. Residues 326 to 346 (PIYQGMFWLLLADCLLLGWIG) traverse the membrane as a helical segment. The Mitochondrial intermembrane segment spans residues 347 to 353 (CQPVEAP). The helical transmembrane segment at 354 to 370 (FVTIGQISSLVFFLFFA) threads the bilayer. Topologically, residues 371-393 (ITPILGRVGRGIPNSYTDETDHT) are mitochondrial matrix.

This sequence belongs to the cytochrome b family. In terms of assembly, component of the ubiquinol-cytochrome c oxidoreductase (cytochrome b-c1 complex, complex III, CIII), a multisubunit enzyme composed of 10 subunits. The complex is composed of 3 respiratory subunits cytochrome b (MT-CYB), cytochrome c1 (CYC1-1 or CYC1-2) and Rieske protein (UCR1-1 or UCR1-2), 2 core protein subunits MPPalpha1 (or MPPalpha2) and MPPB, and 5 low-molecular weight protein subunits QCR7-1 (or QCR7-2), UCRQ-1 (or UCRQ-2), QCR9, UCRY and probably QCR6-1 (or QCR6-2). The complex exists as an obligatory dimer and forms supercomplexes (SCs) in the inner mitochondrial membrane with NADH-ubiquinone oxidoreductase (complex I, CI), resulting in different assemblies (supercomplexes SCI(1)III(2) and SCI(2)III(4)). The cofactor is heme b.

It localises to the mitochondrion inner membrane. Its function is as follows. Component of the ubiquinol-cytochrome c oxidoreductase, a multisubunit transmembrane complex that is part of the mitochondrial electron transport chain which drives oxidative phosphorylation. The respiratory chain contains 3 multisubunit complexes succinate dehydrogenase (complex II, CII), ubiquinol-cytochrome c oxidoreductase (cytochrome b-c1 complex, complex III, CIII) and cytochrome c oxidase (complex IV, CIV), that cooperate to transfer electrons derived from NADH and succinate to molecular oxygen, creating an electrochemical gradient over the inner membrane that drives transmembrane transport and the ATP synthase. The cytochrome b-c1 complex catalyzes electron transfer from ubiquinol to cytochrome c, linking this redox reaction to translocation of protons across the mitochondrial inner membrane, with protons being carried across the membrane as hydrogens on the quinol. In the process called Q cycle, 2 protons are consumed from the matrix, 4 protons are released into the intermembrane space and 2 electrons are passed to cytochrome c. Cytochrome b is a catalytic core subunit containing 2 b-type hemes BL and BH topographically segregated in the quinone reduction (Qi) and quinol oxidation (Q0) sites on opposite sides of the membrane. This chain is Cytochrome b (MT-CYB), found in Arabidopsis thaliana (Mouse-ear cress).